Consider the following 243-residue polypeptide: Exosome complex component Rrp41 (243 aa).

Belongs to the RNase PH family. Rrp41 subfamily. As to quaternary structure, component of the archaeal exosome complex. Forms a hexameric ring-like arrangement composed of 3 Rrp41-Rrp42 heterodimers. The hexameric ring associates with a trimer of Rrp4 and/or Csl4 subunits.

The protein localises to the cytoplasm. Catalytic component of the exosome, which is a complex involved in RNA degradation. Has 3'-&gt;5' exoribonuclease activity. Can also synthesize heteromeric RNA-tails. This is Exosome complex component Rrp41 from Sulfurisphaera tokodaii (strain DSM 16993 / JCM 10545 / NBRC 100140 / 7) (Sulfolobus tokodaii).